We begin with the raw amino-acid sequence, 417 residues long: Gamma-glutamyl phosphate reductase (417 aa).

It belongs to the gamma-glutamyl phosphate reductase family.

The protein resides in the cytoplasm. It carries out the reaction L-glutamate 5-semialdehyde + phosphate + NADP(+) = L-glutamyl 5-phosphate + NADPH + H(+). Its pathway is amino-acid biosynthesis; L-proline biosynthesis; L-glutamate 5-semialdehyde from L-glutamate: step 2/2. Catalyzes the NADPH-dependent reduction of L-glutamate 5-phosphate into L-glutamate 5-semialdehyde and phosphate. The product spontaneously undergoes cyclization to form 1-pyrroline-5-carboxylate. The chain is Gamma-glutamyl phosphate reductase from Klebsiella pneumoniae subsp. pneumoniae (strain ATCC 700721 / MGH 78578).